The sequence spans 309 residues: NADH-cytochrome b5 reductase 2 (309 aa).

Residues 3–23 (ILTAPVLIGVSIVVITVLYLF) form a helical membrane-spanning segment. In terms of domain architecture, FAD-binding FR-type spans 48 to 160 (SVKYPLPLIE…RGPNGLLVYN (113 aa)). FAD is bound by residues 140–170 (DNMK…IRPD) and 179–214 (KFKH…VCSL).

The protein belongs to the flavoprotein pyridine nucleotide cytochrome reductase family. FAD is required as a cofactor.

It is found in the membrane. The catalysed reaction is 2 Fe(III)-[cytochrome b5] + NADH = 2 Fe(II)-[cytochrome b5] + NAD(+) + H(+). Functionally, NADH-cytochrome b5 reductases are involved in desaturation and elongation of fatty acids, cholesterol biosynthesis and drug metabolism. The sequence is that of NADH-cytochrome b5 reductase 2 (cyb5r2) from Danio rerio (Zebrafish).